Here is a 329-residue protein sequence, read N- to C-terminus: Cathepsin K (329 aa).

Residues 1 to 15 form the signal peptide; that stretch reads MWGLKVLLLPVVSFA. The propeptide at 16-114 is activation peptide; the sequence is LHPEEILDTQ…TLYIPDWEGR (99 aa). Asparagine 103 is a glycosylation site (N-linked (GlcNAc...) asparagine). 2 cysteine pairs are disulfide-bonded: cysteine 136–cysteine 177 and cysteine 170–cysteine 210. Residue cysteine 139 is part of the active site. Asparagine 268 carries N-linked (GlcNAc...) asparagine glycosylation. An intrachain disulfide couples cysteine 269 to cysteine 318. Residues histidine 276 and asparagine 296 contribute to the active site.

It belongs to the peptidase C1 family. As to expression, predominantly expressed in osteclasts (bones).

The protein resides in the lysosome. Its subcellular location is the secreted. The protein localises to the apical cell membrane. The catalysed reaction is Broad proteolytic activity. With small-molecule substrates and inhibitors, the major determinant of specificity is P2, which is preferably Leu, Met &gt; Phe, and not Arg.. Its function is as follows. Thiol protease involved in osteoclastic bone resorption and may participate partially in the disorder of bone remodeling. Displays potent endoprotease activity against fibrinogen at acid pH. May play an important role in extracellular matrix degradation. Involved in the release of thyroid hormone thyroxine (T4) by limited proteolysis of TG/thyroglobulin in the thyroid follicle lumen. This Oryctolagus cuniculus (Rabbit) protein is Cathepsin K (CTSK).